We begin with the raw amino-acid sequence, 201 residues long: Protein tirC (201 aa).

The 135-residue stretch at 52-186 (ERIKVFIVHG…YVWINYTEDL (135 aa)) folds into the TIR domain.

This chain is Protein tirC (tirC), found in Dictyostelium discoideum (Social amoeba).